Here is an 89-residue protein sequence, read N- to C-terminus: Small ribosomal subunit protein uS15 (89 aa).

The span at 1–18 (MSLDTAEKQKLIENHQVH) shows a compositional bias: basic and acidic residues. The interval 1–23 (MSLDTAEKQKLIENHQVHPTDTG) is disordered.

This sequence belongs to the universal ribosomal protein uS15 family. In terms of assembly, part of the 30S ribosomal subunit. Forms a bridge to the 50S subunit in the 70S ribosome, contacting the 23S rRNA.

Its function is as follows. One of the primary rRNA binding proteins, it binds directly to 16S rRNA where it helps nucleate assembly of the platform of the 30S subunit by binding and bridging several RNA helices of the 16S rRNA. In terms of biological role, forms an intersubunit bridge (bridge B4) with the 23S rRNA of the 50S subunit in the ribosome. This Prochlorococcus marinus (strain AS9601) protein is Small ribosomal subunit protein uS15.